The primary structure comprises 77 residues: Dermatoxin-S1 (77 aa).

The first 22 residues, 1–22 (MAFLKKSLFLILFLGLVPLSFC), serve as a signal peptide directing secretion. The propeptide occupies 23-44 (ENDKREGENEEEQDDDQSEEKR). Gln-76 bears the Glutamine amide mark.

In terms of tissue distribution, expressed by the skin glands.

It localises to the secreted. It is found in the target cell membrane. Functionally, antimicrobial peptide with potent activity against Gram-positive bacteria B.megaterium, C.glutamicum and S.aureus and mollicutes A.laidlawii and S.melliferum. Less active against Gram-negative bacteria B.cepacia, P.aeruginosa, S.typhimurium and S.meliloti. Probably acts by disturbing membrane functions with its amphipathic structure. This chain is Dermatoxin-S1, found in Phyllomedusa sauvagei (Sauvage's leaf frog).